Here is a 305-residue protein sequence, read N- to C-terminus: Protoheme IX farnesyltransferase 2 (305 aa).

Transmembrane regions (helical) follow at residues V31–I51, W53–I73, A103–N123, L125–L145, N152–T172, A179–I199, V231–L251, and A277–V297.

The protein belongs to the UbiA prenyltransferase family. Protoheme IX farnesyltransferase subfamily.

The protein resides in the cell inner membrane. The enzyme catalyses heme b + (2E,6E)-farnesyl diphosphate + H2O = Fe(II)-heme o + diphosphate. Its pathway is porphyrin-containing compound metabolism; heme O biosynthesis; heme O from protoheme: step 1/1. Converts heme B (protoheme IX) to heme O by substitution of the vinyl group on carbon 2 of heme B porphyrin ring with a hydroxyethyl farnesyl side group. This Pseudoalteromonas atlantica (strain T6c / ATCC BAA-1087) protein is Protoheme IX farnesyltransferase 2.